A 901-amino-acid chain; its full sequence is HTH-type transcriptional regulator MalT (901 aa).

39–46 is an ATP binding site; it reads SPAGYGKT. The region spanning 829-894 is the HTH luxR-type domain; the sequence is ELIRTSPLTQ…AAVQHAQKLL (66 aa). A DNA-binding region (H-T-H motif) is located at residues 853–872; that stretch reads NEQIAGELEVAATTIKTHIR.

This sequence belongs to the MalT family. In terms of assembly, monomer in solution. Oligomerizes to an active state in the presence of the positive effectors ATP and maltotriose.

Activated by ATP and maltotriose, which are both required for DNA binding. Positively regulates the transcription of the maltose regulon whose gene products are responsible for uptake and catabolism of malto-oligosaccharides. Specifically binds to the promoter region of its target genes, recognizing a short DNA motif called the MalT box. The chain is HTH-type transcriptional regulator MalT from Escherichia coli O127:H6 (strain E2348/69 / EPEC).